Reading from the N-terminus, the 679-residue chain is tRNA uridine 5-carboxymethylaminomethyl modification enzyme MnmG (679 aa).

An FAD-binding site is contributed by 15-20 (GAGHAG). Residue 314 to 328 (GPRYCPSIEDKIVRF) coordinates NAD(+).

The protein belongs to the MnmG family. In terms of assembly, homodimer. Heterotetramer of two MnmE and two MnmG subunits. It depends on FAD as a cofactor.

Its subcellular location is the cytoplasm. NAD-binding protein involved in the addition of a carboxymethylaminomethyl (cmnm) group at the wobble position (U34) of certain tRNAs, forming tRNA-cmnm(5)s(2)U34. The protein is tRNA uridine 5-carboxymethylaminomethyl modification enzyme MnmG of Roseiflexus sp. (strain RS-1).